Reading from the N-terminus, the 517-residue chain is Anthranilate--CoA ligase (517 aa).

161–172 (LQYTSGSTGAPK) is a binding site for AMP.

Belongs to the ATP-dependent AMP-binding enzyme family. As to quaternary structure, monomer.

It catalyses the reaction anthranilate + ATP + CoA = anthraniloyl-CoA + AMP + diphosphate. Functionally, catalyzes the formation of anthraniloyl-CoA, which is the priming step for entry into the Pseudomonas quinolone signal (PQS) biosynthetic pathway. Also active on a variety of aromatic substrates, including benzoate and chloro and fluoro derivatives of anthranilate. The polypeptide is Anthranilate--CoA ligase (pqsA) (Pseudomonas aeruginosa (strain ATCC 15692 / DSM 22644 / CIP 104116 / JCM 14847 / LMG 12228 / 1C / PRS 101 / PAO1)).